The primary structure comprises 300 residues: GTPase Era (300 aa).

The Era-type G domain maps to 8–176 (RCGYVAIVGR…EAQIAKHLPE (169 aa)). The tract at residues 16–23 (GRPNVGKS) is G1. 16-23 (GRPNVGKS) is a binding site for GTP. Residues 42–46 (QTTRH) are G2. Residues 63 to 66 (DTPG) form a G3 region. GTP-binding positions include 63–67 (DTPGM) and 125–128 (NKTD). The interval 125 to 128 (NKTD) is G4. Residues 155–157 (ISA) form a G5 region. One can recognise a KH type-2 domain in the interval 199-283 (VREKIMRQLG…MLNLWVKVKG (85 aa)).

It belongs to the TRAFAC class TrmE-Era-EngA-EngB-Septin-like GTPase superfamily. Era GTPase family. Monomer.

The protein localises to the cytoplasm. The protein resides in the cell inner membrane. Its function is as follows. An essential GTPase that binds both GDP and GTP, with rapid nucleotide exchange. Plays a role in 16S rRNA processing and 30S ribosomal subunit biogenesis and possibly also in cell cycle regulation and energy metabolism. The protein is GTPase Era of Pseudomonas putida (strain ATCC 700007 / DSM 6899 / JCM 31910 / BCRC 17059 / LMG 24140 / F1).